A 577-amino-acid chain; its full sequence is Arginine--tRNA ligase (577 aa).

The 'HIGH' region motif lies at 122–132 (PNVAKEMHVGH).

This sequence belongs to the class-I aminoacyl-tRNA synthetase family. Monomer.

The protein resides in the cytoplasm. It catalyses the reaction tRNA(Arg) + L-arginine + ATP = L-arginyl-tRNA(Arg) + AMP + diphosphate. In Haemophilus influenzae (strain PittGG), this protein is Arginine--tRNA ligase.